A 162-amino-acid polypeptide reads, in one-letter code: Shikimate kinase (162 aa).

10 to 15 (GAGKST) contacts ATP. Position 14 (Ser-14) interacts with Mg(2+). Substrate-binding residues include Asp-28, Arg-52, and Gly-73. An ATP-binding site is contributed by Arg-113. Residue Arg-129 coordinates substrate.

This sequence belongs to the shikimate kinase family. As to quaternary structure, monomer. Mg(2+) serves as cofactor.

The protein localises to the cytoplasm. It catalyses the reaction shikimate + ATP = 3-phosphoshikimate + ADP + H(+). The protein operates within metabolic intermediate biosynthesis; chorismate biosynthesis; chorismate from D-erythrose 4-phosphate and phosphoenolpyruvate: step 5/7. Functionally, catalyzes the specific phosphorylation of the 3-hydroxyl group of shikimic acid using ATP as a cosubstrate. The polypeptide is Shikimate kinase (Lactococcus lactis subsp. cremoris (strain MG1363)).